A 328-amino-acid polypeptide reads, in one-letter code: Tetraacyldisaccharide 4'-kinase (328 aa).

Residue 55-62 (TAGGNGKT) participates in ATP binding.

The protein belongs to the LpxK family.

It catalyses the reaction a lipid A disaccharide + ATP = a lipid IVA + ADP + H(+). It participates in glycolipid biosynthesis; lipid IV(A) biosynthesis; lipid IV(A) from (3R)-3-hydroxytetradecanoyl-[acyl-carrier-protein] and UDP-N-acetyl-alpha-D-glucosamine: step 6/6. Functionally, transfers the gamma-phosphate of ATP to the 4'-position of a tetraacyldisaccharide 1-phosphate intermediate (termed DS-1-P) to form tetraacyldisaccharide 1,4'-bis-phosphate (lipid IVA). The polypeptide is Tetraacyldisaccharide 4'-kinase (Shigella boydii serotype 18 (strain CDC 3083-94 / BS512)).